The primary structure comprises 680 residues: MKSQNKYSIRKFSVGASSILIATLLFLSGGQAQAAEKQVNMGNSQEDTVTAQSIGDQQTRENANYQRENGVDEQQHTENLTKNLHNDKTISEENHRKTDDLNKDQLKDDKNSSLNNKNIQRDTTKNNNANPSDVNQGLEQAINDGKQSKVASQQQSKEVDNSQDSNANNNLPSQSLTKEAPSLNKSDQTSQREIVNETEIEKVQPQQNNQANDKITNHNFNNEQEVKPQKDEKTLSVSDLKNNQKSPVEPTKDNDKKNGLNLLKSSAVATLPNKGTKELTAKAKDDQTNKVAKQGQYKNQDPIVLVHGFNGFTDDINPSVLAHYWGGNKMNIRQDLEENGYKAYEASISAFGSNYDRAVELYYYIKGGRVDYGAAHAAKYGHERYGKTYEGIYKDWKPGQKVHLVGHSMGGQTIRQLEELLRNGNREEIEYQKKHGGEISPLFKGNNDNMISSITTLGTPHNGTHASDLAGNEALVRQIVFDIGKMFGNKNSRVDFGLAQWGLKQKPNESYIDYVKRVKQSNLWKSKDNGFYDLTREGATDLNRKTSLNPNIVYKTYTGEATHKALNSDRQKADLNMFFPFVITGNLIGKATEKEWRENDGLVSVISSQHPFNQAYTNATDKIQKGIWQVTPTKHDWDHVDFVGQDSSDTVRTREELQDFWHHLADDLVKTEKVTDTKQA.

Positions 1–34 (MKSQNKYSIRKFSVGASSILIATLLFLSGGQAQA) are cleaved as a signal peptide. Residues 35-290 (AEKQVNMGNS…AKAKDDQTNK (256 aa)) constitute a propeptide that is removed on maturation. Residues 82–259 (KNLHNDKTIS…PTKDNDKKNG (178 aa)) form a disordered region. Residues 84-111 (LHNDKTISEENHRKTDDLNKDQLKDDKN) show a composition bias toward basic and acidic residues. Composition is skewed to polar residues over residues 125–138 (KNNN…NQGL), 162–193 (SQDS…SQRE), and 204–223 (QPQQ…FNNE). Residues 224 to 234 (QEVKPQKDEKT) show a composition bias toward basic and acidic residues. A compositionally biased stretch (polar residues) spans 235-246 (LSVSDLKNNQKS). Ser-408 acts as the Nucleophile in catalysis. The active-site Charge relay system is Asp-600. A Ca(2+)-binding site is contributed by Asp-638. His-639 serves as the catalytic Charge relay system. The Ca(2+) site is built by Asp-641, Asp-646, and Asp-649.

This sequence belongs to the AB hydrolase superfamily. Lipase family.

The protein resides in the secreted. It carries out the reaction a triacylglycerol + H2O = a diacylglycerol + a fatty acid + H(+). The protein is Lipase 1 (lip1) of Staphylococcus aureus (strain Mu50 / ATCC 700699).